We begin with the raw amino-acid sequence, 318 residues long: ATP-dependent (S)-NAD(P)H-hydrate dehydratase (318 aa).

The region spanning 3-313 is the YjeF C-terminal domain; that stretch reads AREVFKRVIP…KEIGPAFDSL (311 aa). Residues Gly-119 and 172–178 contribute to the (6S)-NADPHX site; that span reads NTNEFKR. ATP contacts are provided by residues 210–214 and 229–238; these read KGSKD and TSLRRCGGQG. Residue Asp-239 coordinates (6S)-NADPHX.

It belongs to the NnrD/CARKD family. Requires Mg(2+) as cofactor.

The protein localises to the cytoplasm. It catalyses the reaction (6S)-NADHX + ATP = ADP + phosphate + NADH + H(+). The enzyme catalyses (6S)-NADPHX + ATP = ADP + phosphate + NADPH + H(+). Functionally, catalyzes the dehydration of the S-form of NAD(P)HX at the expense of ATP, which is converted to ADP. Together with NAD(P)HX epimerase, which catalyzes the epimerization of the S- and R-forms, the enzyme allows the repair of both epimers of NAD(P)HX, a damaged form of NAD(P)H that is a result of enzymatic or heat-dependent hydration. The protein is ATP-dependent (S)-NAD(P)H-hydrate dehydratase of Batrachochytrium dendrobatidis (strain JAM81 / FGSC 10211) (Frog chytrid fungus).